The following is a 66-amino-acid chain: Putative alpha-neurotoxin RjAa44 (66 aa).

Positions 1–60 (KEGYPVDWGNCKYECMSDAYCKDLCADRKAKSGYCYKLNWSCYCEGLPDDSPIKTNGHCR) constitute an LCN-type CS-alpha/beta domain. 4 disulfide bridges follow: C11/C59, C15/C35, C21/C42, and C25/C44.

The protein belongs to the long (4 C-C) scorpion toxin superfamily. Sodium channel inhibitor family. Alpha subfamily. Expressed by the venom gland.

The protein localises to the secreted. Alpha toxins bind voltage-independently at site-3 of sodium channels (Nav) and inhibit the inactivation of the activated channels, thereby blocking neuronal transmission. In Rhopalurus junceus (Caribbean blue scorpion), this protein is Putative alpha-neurotoxin RjAa44.